The chain runs to 144 residues: Transmembrane protein 170A (144 aa).

Topologically, residues 1 to 50 are extracellular; sequence MEREGSGGGGGSAGLLQQILSLKLVPRVGNGTLCPNSTSLCSFPEMWYGV. Residues Asn30 and Asn36 are each glycosylated (N-linked (GlcNAc...) asparagine). A helical transmembrane segment spans residues 51-71; it reads FLWALMSSVFFHVPAGLLALF. Residues 72–85 lie on the Cytoplasmic side of the membrane; that stretch reads TLRHHKYGRFMSVS. A helical membrane pass occupies residues 86-106; sequence ILLMGIVGPITAGILTSAAIA. The Extracellular segment spans residues 107–116; that stretch reads GVYRAAGKEM. Residues 117–137 form a helical membrane-spanning segment; the sequence is IPFEALTLGTGQTFCVVVVSF. Residues 138-144 are Cytoplasmic-facing; that stretch reads LRVLATL.

This sequence belongs to the TMEM170 family. As to quaternary structure, interacts with RTN4.

It localises to the endoplasmic reticulum membrane. It is found in the nucleus envelope. In terms of biological role, acts as a regulator of endoplasmic reticulum (ER) and nuclear envelope (NE) morphogenesis. Affects the ratio between tubular ER and ER sheets by promoting sheet formation at the expense of tubules. Influences NE expansion, nuclear pore complex formation and proper localization of inner nuclear membrane proteins. This chain is Transmembrane protein 170A (Tmem170a), found in Mus musculus (Mouse).